Reading from the N-terminus, the 454-residue chain is Bifunctional protein GlmU (454 aa).

A pyrophosphorylase region spans residues M1–R228. Residues L8 to G11, K22, Q73, and G78 to T79 each bind UDP-N-acetyl-alpha-D-glucosamine. A Mg(2+)-binding site is contributed by D103. Residues G140, E154, N169, and N226 each coordinate UDP-N-acetyl-alpha-D-glucosamine. Position 226 (N226) interacts with Mg(2+). A linker region spans residues A229–N249. The interval G250–K454 is N-acetyltransferase. Residues R331 and K349 each contribute to the UDP-N-acetyl-alpha-D-glucosamine site. H361 serves as the catalytic Proton acceptor. UDP-N-acetyl-alpha-D-glucosamine is bound by residues Y364 and N375. Acetyl-CoA-binding positions include N384–Y385, A421, and R438.

It in the N-terminal section; belongs to the N-acetylglucosamine-1-phosphate uridyltransferase family. In the C-terminal section; belongs to the transferase hexapeptide repeat family. Homotrimer. Mg(2+) is required as a cofactor.

The protein resides in the cytoplasm. It carries out the reaction alpha-D-glucosamine 1-phosphate + acetyl-CoA = N-acetyl-alpha-D-glucosamine 1-phosphate + CoA + H(+). The enzyme catalyses N-acetyl-alpha-D-glucosamine 1-phosphate + UTP + H(+) = UDP-N-acetyl-alpha-D-glucosamine + diphosphate. Its pathway is nucleotide-sugar biosynthesis; UDP-N-acetyl-alpha-D-glucosamine biosynthesis; N-acetyl-alpha-D-glucosamine 1-phosphate from alpha-D-glucosamine 6-phosphate (route II): step 2/2. It participates in nucleotide-sugar biosynthesis; UDP-N-acetyl-alpha-D-glucosamine biosynthesis; UDP-N-acetyl-alpha-D-glucosamine from N-acetyl-alpha-D-glucosamine 1-phosphate: step 1/1. It functions in the pathway bacterial outer membrane biogenesis; LPS lipid A biosynthesis. Its function is as follows. Catalyzes the last two sequential reactions in the de novo biosynthetic pathway for UDP-N-acetylglucosamine (UDP-GlcNAc). The C-terminal domain catalyzes the transfer of acetyl group from acetyl coenzyme A to glucosamine-1-phosphate (GlcN-1-P) to produce N-acetylglucosamine-1-phosphate (GlcNAc-1-P), which is converted into UDP-GlcNAc by the transfer of uridine 5-monophosphate (from uridine 5-triphosphate), a reaction catalyzed by the N-terminal domain. This is Bifunctional protein GlmU from Clostridium perfringens (strain SM101 / Type A).